We begin with the raw amino-acid sequence, 115 residues long: Ribonuclease P protein component (115 aa).

The protein belongs to the RnpA family. In terms of assembly, consists of a catalytic RNA component (M1 or rnpB) and a protein subunit.

The enzyme catalyses Endonucleolytic cleavage of RNA, removing 5'-extranucleotides from tRNA precursor.. RNaseP catalyzes the removal of the 5'-leader sequence from pre-tRNA to produce the mature 5'-terminus. It can also cleave other RNA substrates such as 4.5S RNA. The protein component plays an auxiliary but essential role in vivo by binding to the 5'-leader sequence and broadening the substrate specificity of the ribozyme. The sequence is that of Ribonuclease P protein component from Staphylococcus epidermidis (strain ATCC 35984 / DSM 28319 / BCRC 17069 / CCUG 31568 / BM 3577 / RP62A).